Reading from the N-terminus, the 702-residue chain is Polyribonucleotide nucleotidyltransferase (702 aa).

Mg(2+) is bound by residues Asp485 and Asp491. In terms of domain architecture, KH spans 552–612; the sequence is PRTEIICIDP…EGVKKAISII (61 aa). The S1 motif domain maps to 622 to 690; it reads GEIYLGKVTK…NQGRINLSRK (69 aa).

It belongs to the polyribonucleotide nucleotidyltransferase family. Mg(2+) is required as a cofactor.

Its subcellular location is the cytoplasm. It carries out the reaction RNA(n+1) + phosphate = RNA(n) + a ribonucleoside 5'-diphosphate. Its function is as follows. Involved in mRNA degradation. Catalyzes the phosphorolysis of single-stranded polyribonucleotides processively in the 3'- to 5'-direction. The protein is Polyribonucleotide nucleotidyltransferase of Clostridium botulinum (strain Loch Maree / Type A3).